A 272-amino-acid polypeptide reads, in one-letter code: MTFTEQLAAAWQRNDSLLCVGLDPDPQKLPLSLTGAGGAIFSFCREIVDATADLVCAFKPQIAYFHSQRAEDQLEQLIHYIHDAHPGIPVILDAKRGDIGSTAEHYALEAFERYHADAVTVSPYMGFDSMQPYLAYPDRGVIVLCRTSNPGGSDVQFLQVDGKPLYQLVAEAARERWNTTGQMGLVVGATFPNEIARVRQIVGDMPLLIPGIGAQGGDIEATVKAGRTADGTGMMINSSRAILYASREKDFAAAARNVALQTRETINRYRHG.

The active-site Proton donor is Lys-95.

It belongs to the OMP decarboxylase family. Type 2 subfamily.

The catalysed reaction is orotidine 5'-phosphate + H(+) = UMP + CO2. Its pathway is pyrimidine metabolism; UMP biosynthesis via de novo pathway; UMP from orotate: step 2/2. This is Orotidine 5'-phosphate decarboxylase from Cupriavidus necator (strain ATCC 17699 / DSM 428 / KCTC 22496 / NCIMB 10442 / H16 / Stanier 337) (Ralstonia eutropha).